The primary structure comprises 302 residues: 4-hydroxy-tetrahydrodipicolinate synthase (302 aa).

Position 55 (Thr-55) interacts with pyruvate. The active-site Proton donor/acceptor is Tyr-144. Lys-172 serves as the catalytic Schiff-base intermediate with substrate. Val-214 provides a ligand contact to pyruvate.

Belongs to the DapA family. As to quaternary structure, homotetramer; dimer of dimers.

It is found in the cytoplasm. The enzyme catalyses L-aspartate 4-semialdehyde + pyruvate = (2S,4S)-4-hydroxy-2,3,4,5-tetrahydrodipicolinate + H2O + H(+). It functions in the pathway amino-acid biosynthesis; L-lysine biosynthesis via DAP pathway; (S)-tetrahydrodipicolinate from L-aspartate: step 3/4. In terms of biological role, catalyzes the condensation of (S)-aspartate-beta-semialdehyde [(S)-ASA] and pyruvate to 4-hydroxy-tetrahydrodipicolinate (HTPA). The sequence is that of 4-hydroxy-tetrahydrodipicolinate synthase from Prochlorococcus marinus (strain SARG / CCMP1375 / SS120).